The following is a 555-amino-acid chain: Alpha-copaene synthase (555 aa).

Mg(2+) is bound by residues Asp312, Asp316, Asp452, Ser456, and Glu460. The short motif at 312–316 (DDTYD) is the DDXXD motif element.

It belongs to the terpene synthase family. Mg(2+) serves as cofactor. As to expression, mainly expressed in sunflower trichomes.

The enzyme catalyses (2E,6E)-farnesyl diphosphate = alpha-copaene + diphosphate. It carries out the reaction (2E,6E)-farnesyl diphosphate = alpha-muurolene + diphosphate. The catalysed reaction is (2E,6E)-farnesyl diphosphate = alpha-humulene + diphosphate. It participates in secondary metabolite biosynthesis; terpenoid biosynthesis. In terms of biological role, involved in the biosynthesis of germacrene-derived sesquiterpene lactones. Catalyzes the cyclization of farnesyl diphosphate to alpha-copaene, delta-cadinene, alpha-muurolene, beta-caryophyllene and alpha-humulene. This chain is Alpha-copaene synthase (CS), found in Helianthus annuus (Common sunflower).